We begin with the raw amino-acid sequence, 195 residues long: Imidazoleglycerol-phosphate dehydratase (195 aa).

The protein belongs to the imidazoleglycerol-phosphate dehydratase family.

It localises to the cytoplasm. It carries out the reaction D-erythro-1-(imidazol-4-yl)glycerol 3-phosphate = 3-(imidazol-4-yl)-2-oxopropyl phosphate + H2O. Its pathway is amino-acid biosynthesis; L-histidine biosynthesis; L-histidine from 5-phospho-alpha-D-ribose 1-diphosphate: step 6/9. This is Imidazoleglycerol-phosphate dehydratase from Cupriavidus taiwanensis (strain DSM 17343 / BCRC 17206 / CCUG 44338 / CIP 107171 / LMG 19424 / R1) (Ralstonia taiwanensis (strain LMG 19424)).